Consider the following 226-residue polypeptide: PKHD-type hydroxylase LHK_00496 (226 aa).

A Fe2OG dioxygenase domain is found at 78-178; sequence RFFPPLFNRY…RVASFMWIQS (101 aa). The Fe cation site is built by H96, D98, and H159. Residue R169 participates in 2-oxoglutarate binding.

Fe(2+) is required as a cofactor. L-ascorbate serves as cofactor.

The polypeptide is PKHD-type hydroxylase LHK_00496 (Laribacter hongkongensis (strain HLHK9)).